Here is a 179-residue protein sequence, read N- to C-terminus: ATP synthase subunit b (179 aa).

A helical transmembrane segment spans residues 26–46; the sequence is FLEANLFNLAILLGIIIYYAP.

It belongs to the ATPase B chain family. As to quaternary structure, F-type ATPases have 2 components, F(1) - the catalytic core - and F(0) - the membrane proton channel. F(1) has five subunits: alpha(3), beta(3), gamma(1), delta(1), epsilon(1). F(0) has four main subunits: a(1), b(1), b'(1) and c(10-14). The alpha and beta chains form an alternating ring which encloses part of the gamma chain. F(1) is attached to F(0) by a central stalk formed by the gamma and epsilon chains, while a peripheral stalk is formed by the delta, b and b' chains.

It localises to the cellular thylakoid membrane. In terms of biological role, f(1)F(0) ATP synthase produces ATP from ADP in the presence of a proton or sodium gradient. F-type ATPases consist of two structural domains, F(1) containing the extramembraneous catalytic core and F(0) containing the membrane proton channel, linked together by a central stalk and a peripheral stalk. During catalysis, ATP synthesis in the catalytic domain of F(1) is coupled via a rotary mechanism of the central stalk subunits to proton translocation. Its function is as follows. Component of the F(0) channel, it forms part of the peripheral stalk, linking F(1) to F(0). The polypeptide is ATP synthase subunit b (Synechocystis sp. (strain ATCC 27184 / PCC 6803 / Kazusa)).